Here is a 331-residue protein sequence, read N- to C-terminus: CRISPR-associated endonuclease Cas1 (331 aa).

Glu-158, His-223, and Asp-238 together coordinate Mn(2+).

The protein belongs to the CRISPR-associated endonuclease Cas1 family. As to quaternary structure, homodimer, forms a heterotetramer with a Cas2 homodimer. Mg(2+) is required as a cofactor. Requires Mn(2+) as cofactor.

CRISPR (clustered regularly interspaced short palindromic repeat), is an adaptive immune system that provides protection against mobile genetic elements (viruses, transposable elements and conjugative plasmids). CRISPR clusters contain spacers, sequences complementary to antecedent mobile elements, and target invading nucleic acids. CRISPR clusters are transcribed and processed into CRISPR RNA (crRNA). Acts as a dsDNA endonuclease. Involved in the integration of spacer DNA into the CRISPR cassette. Plasmid targeted by CRISPR locus P1 transform wild-type cells very poorly. This Haloferax volcanii (strain ATCC 29605 / DSM 3757 / JCM 8879 / NBRC 14742 / NCIMB 2012 / VKM B-1768 / DS2) (Halobacterium volcanii) protein is CRISPR-associated endonuclease Cas1.